The following is a 37-amino-acid chain: GILSLVKGAAKLLGKGLAKEGGKVGLEFIACKVTNQC.

Cysteines 31 and 37 form a disulfide.

As to expression, expressed by the skin glands.

It is found in the secreted. Antimicrobial peptide. The chain is Esculentin-2Ra from Pelophylax ridibundus (Marsh frog).